The following is a 435-amino-acid chain: Envelope glycoprotein M (435 aa).

Topologically, residues M1–R36 are intravirion. Residues I37–I57 form a helical membrane-spanning segment. Residues A58–T111 are Virion surface-facing. The helical transmembrane segment at Y112–I132 threads the bilayer. At H133–T155 the chain is on the intravirion side. A helical membrane pass occupies residues T156–Y176. Topologically, residues K177–Q178 are virion surface. Residues I179–Y199 form a helical membrane-spanning segment. The Intravirion portion of the chain corresponds to F200 to A233. Residues V234–L254 traverse the membrane as a helical segment. Over E255 to G265 the chain is Virion surface. A helical membrane pass occupies residues L266 to S288. The Intravirion portion of the chain corresponds to E289–H294. Residues Y295 to A317 form a helical membrane-spanning segment. The Virion surface segment spans residues H318–R334. The helical transmembrane segment at L335 to L355 threads the bilayer. Topologically, residues L356–E435 are intravirion.

This sequence belongs to the herpesviridae glycoprotein M family. Interacts (via N-terminus) with gN (via N-terminus). The gM-gN heterodimer forms the gCII complex.

It localises to the virion membrane. Its subcellular location is the host Golgi apparatus. The protein resides in the host trans-Golgi network. The protein localises to the host endosome membrane. It is found in the host nucleus inner membrane. Its function is as follows. Envelope glycoprotein important for virion assembly and egress. Plays a role in the correct incorporation of gH-gL into virion membrane. Directs the glycoprotein N (gN) to the host trans-Golgi network. The protein is Envelope glycoprotein M of Homo sapiens (Human).